A 268-amino-acid polypeptide reads, in one-letter code: Undecaprenyl-diphosphatase 1 (268 aa).

The next 7 membrane-spanning stretches (helical) occupy residues 5 to 25 (SIIS…IPVS), 43 to 63 (GNTF…LVYF), 84 to 104 (LAVL…HDFI), 107 to 127 (VLFE…FILL), 184 to 204 (AAEF…VLDL), 218 to 238 (LIAV…RSLL), and 247 to 267 (APFA…LLVI).

This sequence belongs to the UppP family.

The protein localises to the cell inner membrane. The catalysed reaction is di-trans,octa-cis-undecaprenyl diphosphate + H2O = di-trans,octa-cis-undecaprenyl phosphate + phosphate + H(+). In terms of biological role, catalyzes the dephosphorylation of undecaprenyl diphosphate (UPP). Confers resistance to bacitracin. This Agrobacterium fabrum (strain C58 / ATCC 33970) (Agrobacterium tumefaciens (strain C58)) protein is Undecaprenyl-diphosphatase 1.